The primary structure comprises 137 residues: Large ribosomal subunit protein eL28 (137 aa).

S2 is subject to N-acetylserine. Glycyl lysine isopeptide (Lys-Gly) (interchain with G-Cter in SUMO2) cross-links involve residues K58 and K65. A Phosphoserine modification is found at S115.

Belongs to the eukaryotic ribosomal protein eL28 family. Component of the large ribosomal subunit.

The protein resides in the cytoplasm. Its function is as follows. Component of the large ribosomal subunit. The ribosome is a large ribonucleoprotein complex responsible for the synthesis of proteins in the cell. This chain is Large ribosomal subunit protein eL28 (RPL28), found in Homo sapiens (Human).